The sequence spans 131 residues: Small ribosomal subunit protein bS6 (131 aa).

The segment at 98–131 is disordered; sequence EASPMVKAKDERRERRDDFANETADDAEAGDSEE. Residues 104 to 116 show a composition bias toward basic and acidic residues; it reads KAKDERRERRDDF. A compositionally biased stretch (acidic residues) spans 120–131; sequence TADDAEAGDSEE.

It belongs to the bacterial ribosomal protein bS6 family.

Binds together with bS18 to 16S ribosomal RNA. This is Small ribosomal subunit protein bS6 from Salmonella dublin (strain CT_02021853).